A 265-amino-acid chain; its full sequence is Thiazole synthase (265 aa).

Catalysis depends on K107, which acts as the Schiff-base intermediate with DXP. Residues G168, 194–195 (AG), and 216–217 (NT) contribute to the 1-deoxy-D-xylulose 5-phosphate site.

It belongs to the ThiG family. As to quaternary structure, homotetramer. Forms heterodimers with either ThiH or ThiS.

The protein localises to the cytoplasm. The catalysed reaction is [ThiS sulfur-carrier protein]-C-terminal-Gly-aminoethanethioate + 2-iminoacetate + 1-deoxy-D-xylulose 5-phosphate = [ThiS sulfur-carrier protein]-C-terminal Gly-Gly + 2-[(2R,5Z)-2-carboxy-4-methylthiazol-5(2H)-ylidene]ethyl phosphate + 2 H2O + H(+). It functions in the pathway cofactor biosynthesis; thiamine diphosphate biosynthesis. Functionally, catalyzes the rearrangement of 1-deoxy-D-xylulose 5-phosphate (DXP) to produce the thiazole phosphate moiety of thiamine. Sulfur is provided by the thiocarboxylate moiety of the carrier protein ThiS. In vitro, sulfur can be provided by H(2)S. The sequence is that of Thiazole synthase from Pseudomonas aeruginosa (strain LESB58).